The chain runs to 329 residues: 2,3,4,5-tetrahydropyridine-2,6-dicarboxylate N-succinyltransferase (329 aa).

Mg(2+) contacts are provided by Asp177 and Glu194. Glu210 (acyl-anhydride intermediate) is an active-site residue. Residues Arg212, Gly227, Ser230, Ala253, Glu268–Ala269, Gly276, Lys288, and Arg301–Ser304 each bind succinyl-CoA.

This sequence belongs to the type 2 tetrahydrodipicolinate N-succinyltransferase family. Homotrimer.

The protein localises to the cytoplasm. It carries out the reaction (S)-2,3,4,5-tetrahydrodipicolinate + succinyl-CoA + H2O = (S)-2-succinylamino-6-oxoheptanedioate + CoA. It functions in the pathway amino-acid biosynthesis; L-lysine biosynthesis via DAP pathway; LL-2,6-diaminopimelate from (S)-tetrahydrodipicolinate (succinylase route): step 1/3. Functionally, catalyzes the conversion of the cyclic tetrahydrodipicolinate (THDP) into the acyclic N-succinyl-L-2-amino-6-oxopimelate using succinyl-CoA. This is 2,3,4,5-tetrahydropyridine-2,6-dicarboxylate N-succinyltransferase from Streptomyces coelicolor (strain ATCC BAA-471 / A3(2) / M145).